Here is a 392-residue protein sequence, read N- to C-terminus: NAC domain-containing protein 58 (392 aa).

In terms of domain architecture, NAC spans 9 to 173; it reads LPPGFRFHPT…DWVLCRIYKK (165 aa). Positions 317-345 are disordered; sequence STSAGAVVEPPAVTGKRKRSSDGGEPTIQ.

Expressed in leaves, nodes, internodes and mature seeds. Highly expressed in roots. Expressed in leaf sheaths, flag leaves and inflorescences. Expressed in primary and lateral roots, particularly in the vascular tissues. Expressed in the primary phloem of the culm and leaf sheaths. Expressed principally in the primary phloem and in the peripheral zone of the leaf vascular bundles. Expressed in the floral tissues.

Its subcellular location is the nucleus. Its function is as follows. Transcription factor that acts as a positive regulator of the jasmonate (JA) pathway to mediate leaf senescence. May directly regulate LOX2, AOC, AOS2, AOC1 and OPR7, which are genes involved in the biosynthesis of JA. Regulates positively leaf senescence by directly targeting senescence-associated genes (SAGs) related to chlorophyll degradation, nutrient transport and other genes associated with abscisic acid-induced leaf senescence. Transcription activator that plays a role in mediating abiotic stress responses through the abscisic acid (ABA) pathway. Possesses transcriptional activator activity in yeast. This is NAC domain-containing protein 58 from Oryza sativa subsp. japonica (Rice).